A 130-amino-acid chain; its full sequence is Small ribosomal subunit protein uS9 (130 aa).

Positions 98–130 (LKRAGLLTRDPRMKERKKPGLKKARRSPQFSKR) are disordered. A compositionally biased stretch (basic residues) spans 111–130 (KERKKPGLKKARRSPQFSKR).

Belongs to the universal ribosomal protein uS9 family.

The polypeptide is Small ribosomal subunit protein uS9 (rpsI) (Staphylococcus carnosus (strain TM300)).